Reading from the N-terminus, the 102-residue chain is Large ribosomal subunit protein bL21 (102 aa).

The protein belongs to the bacterial ribosomal protein bL21 family. Part of the 50S ribosomal subunit. Contacts protein L20.

Its function is as follows. This protein binds to 23S rRNA in the presence of protein L20. The sequence is that of Large ribosomal subunit protein bL21 from Listeria monocytogenes serotype 4b (strain CLIP80459).